A 157-amino-acid polypeptide reads, in one-letter code: MPRRREVPKREILPDPKFGDVDLAKFMNVIMQGGKKAVAERIIYGALEQIEKKNPGKDPLEAFHMAIGNIKPMVEVKSRRVGGANYQVPVEVRPVRRMALAMRWLKEAAKKRGEKSMSLRLANELMEATEGRGGAMKKRDEVHRMAEANKAFSHFRF.

It belongs to the universal ribosomal protein uS7 family. As to quaternary structure, part of the 30S ribosomal subunit. Contacts proteins S9 and S11.

One of the primary rRNA binding proteins, it binds directly to 16S rRNA where it nucleates assembly of the head domain of the 30S subunit. Is located at the subunit interface close to the decoding center, probably blocks exit of the E-site tRNA. The polypeptide is Small ribosomal subunit protein uS7 (Polaromonas naphthalenivorans (strain CJ2)).